We begin with the raw amino-acid sequence, 381 residues long: Malonyl-CoA-acyl carrier protein transacylase, mitochondrial (381 aa).

Residues Ser151 and His268 contribute to the active site. Position 312 is an N6-succinyllysine (Lys312).

It belongs to the type II malonyltransferase family. Expressed in retinal ganglion cells.

It is found in the mitochondrion. It catalyses the reaction holo-[ACP] + malonyl-CoA = malonyl-[ACP] + CoA. Its pathway is lipid metabolism; fatty acid biosynthesis. Catalyzes the transfer of a malonyl moiety from malonyl-CoA to the free thiol group of the phosphopantetheine arm of the mitochondrial ACP protein (NDUFAB1). This suggests the existence of the biosynthesis of fatty acids in mitochondria. This Mus musculus (Mouse) protein is Malonyl-CoA-acyl carrier protein transacylase, mitochondrial.